Here is a 317-residue protein sequence, read N- to C-terminus: MSKIAFLFPGQGSQFIGMGKELYEQVPAAKRLFDEADETLETKLSSLIFEGDAEELTLTYNAQPALLTTSIAVLEKFKESGITPDFTAGHSLGEYSALVAAGALSFKDAVYTVRKRGEFMNEAVPAGEGAMAAILGMDAEALKQVTDKVTEEGNLVQLANLNCPGQIVISGTAKGVELASELAKENGAKRAIPLEVSGPFHSELMKPAAEKLKEVLDACDIKDADVPVISNVSADVMTEKADIKEKLIEQLYSPVRFEESINKLIAEGVTTFIEIGPGKVLSGLVKKVNRRLKTIAVSDPETIELAIQTLKEENDNA.

Residues S91 and H201 contribute to the active site.

The protein belongs to the FabD family.

It carries out the reaction holo-[ACP] + malonyl-CoA = malonyl-[ACP] + CoA. It participates in lipid metabolism; fatty acid biosynthesis. The sequence is that of Malonyl CoA-acyl carrier protein transacylase (fabD) from Bacillus subtilis (strain 168).